The chain runs to 901 residues: Protein translocase subunit SecA (901 aa).

ATP contacts are provided by residues Gln85, 103 to 107 (GEGKT), and Asp492. The tract at residues 828–901 (GLVTDDGGNP…PKNRRNKKRR (74 aa)) is disordered. Basic and acidic residues predominate over residues 871–881 (DGQKPRGEGNR). Basic residues predominate over residues 882 to 901 (AARRSAASKKPKNRRNKKRR).

The protein belongs to the SecA family. As to quaternary structure, monomer and homodimer. Part of the essential Sec protein translocation apparatus which comprises SecA, SecYEG and auxiliary proteins SecDF. Other proteins may also be involved.

Its subcellular location is the cell membrane. The protein resides in the cytoplasm. The enzyme catalyses ATP + H2O + cellular proteinSide 1 = ADP + phosphate + cellular proteinSide 2.. Part of the Sec protein translocase complex. Interacts with the SecYEG preprotein conducting channel. Has a central role in coupling the hydrolysis of ATP to the transfer of proteins into and across the cell membrane, serving as an ATP-driven molecular motor driving the stepwise translocation of polypeptide chains across the membrane. The chain is Protein translocase subunit SecA from Cutibacterium acnes (strain DSM 16379 / KPA171202) (Propionibacterium acnes).